The following is a 418-amino-acid chain: Glutamyl-tRNA reductase (418 aa).

Substrate contacts are provided by residues 49–52 (TCNR), S109, 114–116 (EPQ), and Q120. Catalysis depends on C50, which acts as the Nucleophile. 189 to 194 (GAGETI) contributes to the NADP(+) binding site.

It belongs to the glutamyl-tRNA reductase family. As to quaternary structure, homodimer.

The catalysed reaction is (S)-4-amino-5-oxopentanoate + tRNA(Glu) + NADP(+) = L-glutamyl-tRNA(Glu) + NADPH + H(+). The protein operates within porphyrin-containing compound metabolism; protoporphyrin-IX biosynthesis; 5-aminolevulinate from L-glutamyl-tRNA(Glu): step 1/2. Functionally, catalyzes the NADPH-dependent reduction of glutamyl-tRNA(Glu) to glutamate 1-semialdehyde (GSA). The sequence is that of Glutamyl-tRNA reductase from Shigella flexneri.